We begin with the raw amino-acid sequence, 147 residues long: Small ribosomal subunit protein bS6 (147 aa).

The segment covering 97 to 141 (EEGPSAMMRKADRDRERDDRGGGFRGDREGGFRGDRGPRRPREEA) has biased composition (basic and acidic residues). Residues 97 to 147 (EEGPSAMMRKADRDRERDDRGGGFRGDREGGFRGDRGPRRPREEAPAVVEE) form a disordered region.

The protein belongs to the bacterial ribosomal protein bS6 family.

Functionally, binds together with bS18 to 16S ribosomal RNA. This chain is Small ribosomal subunit protein bS6, found in Nitrobacter hamburgensis (strain DSM 10229 / NCIMB 13809 / X14).